The primary structure comprises 702 residues: Polyribonucleotide nucleotidyltransferase 1 (702 aa).

2 residues coordinate Mg(2+): Asp483 and Asp489. In terms of domain architecture, KH spans 550 to 609 (PQVTKLKVHPDKVREVIGAGGKVINKIIDETGVKINIENDGTIYIAAPDQESARVALEMI). The region spanning 619–687 (GEVYTGKVIK…PQGKIGLSRK (69 aa)) is the S1 motif domain.

It belongs to the polyribonucleotide nucleotidyltransferase family. Mg(2+) serves as cofactor.

Its subcellular location is the cytoplasm. It catalyses the reaction RNA(n+1) + phosphate = RNA(n) + a ribonucleoside 5'-diphosphate. Its function is as follows. Involved in mRNA degradation. Catalyzes the phosphorolysis of single-stranded polyribonucleotides processively in the 3'- to 5'-direction. This is Polyribonucleotide nucleotidyltransferase 1 from Alkaliphilus metalliredigens (strain QYMF).